Here is a 240-residue protein sequence, read N- to C-terminus: Probable transcriptional activator (240 aa).

An essential for the oxygen-regulated activity region spans residues 17 to 28 (CTSCQARHGVVC). The HTH crp-type domain maps to 158-232 (RTAEEKVASL…FRHIIVPDMD (75 aa)). Residues 191 to 210 (RAEIADFLGLTIETVSRQMT) constitute a DNA-binding region (H-T-H motif).

Its function is as follows. Promotes the microaerobic and symbiotic induction of fixN, possibly by binding to the FNR consensus binding site upstream of fixN. The chain is Probable transcriptional activator (fnrN) from Rhizobium leguminosarum bv. viciae.